Consider the following 201-residue polypeptide: Histidinol dehydrogenase (201 aa).

The protein belongs to the histidinol dehydrogenase family. As to quaternary structure, homodimer. Zn(2+) is required as a cofactor.

The catalysed reaction is L-histidinol + 2 NAD(+) + H2O = L-histidine + 2 NADH + 3 H(+). It participates in amino-acid biosynthesis; L-histidine biosynthesis; L-histidine from 5-phospho-alpha-D-ribose 1-diphosphate: step 9/9. Functionally, catalyzes the sequential NAD-dependent oxidations of L-histidinol to L-histidinaldehyde and then to L-histidine. The chain is Histidinol dehydrogenase (hisD) from Buchnera aphidicola subsp. Schlechtendalia chinensis.